The primary structure comprises 90 residues: MIHYHAIITGRVQGVGFRYFVQGEAVNRGMKGWVRNTDEGHVELKVEGEQQEVLDFLKTVRKGSPFSKVTDMQMEQLPEFAHYQDFRIKG.

Residues 3–90 enclose the Acylphosphatase-like domain; sequence HYHAIITGRV…AHYQDFRIKG (88 aa). Catalysis depends on residues R18 and N36.

Belongs to the acylphosphatase family.

It catalyses the reaction an acyl phosphate + H2O = a carboxylate + phosphate + H(+). This chain is Acylphosphatase (acyP), found in Bacillus pumilus (strain SAFR-032).